The sequence spans 326 residues: GTP 3',8-cyclase (326 aa).

In terms of domain architecture, Radical SAM core spans 6–220; that stretch reads SFGRRINYLR…DRISASYELE (215 aa). Arg-15 contributes to the GTP binding site. Residues Cys-22 and Cys-26 each contribute to the [4Fe-4S] cluster site. Tyr-28 provides a ligand contact to S-adenosyl-L-methionine. Cys-29 is a [4Fe-4S] cluster binding site. Arg-65 serves as a coordination point for GTP. Gly-69 contributes to the S-adenosyl-L-methionine binding site. Residue Thr-96 participates in GTP binding. Ser-120 provides a ligand contact to S-adenosyl-L-methionine. Lys-157 provides a ligand contact to GTP. S-adenosyl-L-methionine is bound at residue Met-191. Cys-254 and Cys-257 together coordinate [4Fe-4S] cluster. 259–261 is a GTP binding site; it reads RVR. Cys-271 serves as a coordination point for [4Fe-4S] cluster.

The protein belongs to the radical SAM superfamily. MoaA family. In terms of assembly, monomer and homodimer. [4Fe-4S] cluster serves as cofactor.

The catalysed reaction is GTP + AH2 + S-adenosyl-L-methionine = (8S)-3',8-cyclo-7,8-dihydroguanosine 5'-triphosphate + 5'-deoxyadenosine + L-methionine + A + H(+). It participates in cofactor biosynthesis; molybdopterin biosynthesis. Its function is as follows. Catalyzes the cyclization of GTP to (8S)-3',8-cyclo-7,8-dihydroguanosine 5'-triphosphate. This Geobacter sulfurreducens (strain ATCC 51573 / DSM 12127 / PCA) protein is GTP 3',8-cyclase.